The chain runs to 650 residues: MGPASPAARGLSRRPGQPPLPLLLPLLLLLLRAQPAIGSLAGGSPGAAEAPGSAQVAGLCGRLTLHRDLRTGRWEPDPQRSRRCLRDPQRVLEYCRQMYPELQIARVEQATQAIPMERWCGGSRSGSCAHPHHQVVPFRCLPGEFVSEALLVPEGCRFLHQERMDQCESSTRRHQEAQEACSSQGLILHGSGMLLPCGSDRFRGVEYVCCPPPGTPDPSGTAVGDPSTRSWPPGSRVEGAEDEEEEESFPQPVDDYFVEPPQAEEEEETVPPPSSHTLAVVGKVTPTPRPTDGVDIYFGMPGEISEHEGFLRAKMDLEERRMRQINEVMREWAMADNQSKNLPKADRQALNEHFQSILQTLEEQVSGERQRLVETHATRVIALINDQRRAALEGFLAALQADPPQAERVLLALRRYLRAEQKEQRHTLRHYQHVAAVDPEKAQQMRFQVHTHLQVIEERVNQSLGLLDQNPHLAQELRPQIQELLHSEHLGPSELEAPAPGGSSEDKGGLQPPDSKDDTPMTLPKGSTEQDAASPEKEKMNPLEQYERKVNASVPRGFPFHSSEIQRDELAPAGTGVSREAVSGLLIMGAGGGSLIVLSMLLLRRKKPYGAISHGVVEVDPMLTLEEQQLRELQRHGYENPTYRFLEERP.

The signal sequence occupies residues 1–38 (MGPASPAARGLSRRPGQPPLPLLLPLLLLLLRAQPAIG). Over 39-580 (SLAGGSPGAA…APAGTGVSRE (542 aa)) the chain is Extracellular. The segment at 50–146 (APGSAQVAGL…PFRCLPGEFV (97 aa)) is GFLD subdomain. The region spanning 50–212 (APGSAQVAGL…RGVEYVCCPP (163 aa)) is the E1 domain. Intrachain disulfides connect cysteine 60–cysteine 84, cysteine 95–cysteine 140, cysteine 120–cysteine 128, cysteine 156–cysteine 210, cysteine 167–cysteine 197, and cysteine 181–cysteine 209. Residues 154–212 (EGCRFLHQERMDQCESSTRRHQEAQEACSSQGLILHGSGMLLPCGSDRFRGVEYVCCPP) form a cuBD subdomain region. A Cu(2+)-binding site is contributed by histidine 174. 3 residues coordinate Zn(2+): glutamate 206, cysteine 209, and cysteine 210. A disordered region spans residues 214–287 (GTPDPSGTAV…LAVVGKVTPT (74 aa)). Threonine 215 is a glycosylation site (O-linked (GalNAc...) threonine). O-linked (GalNAc...) serine glycosylation occurs at serine 227. The O-linked (GalNAc...) threonine glycan is linked to threonine 228. The interval 285–305 (TPTPRPTDGVDIYFGMPGEIS) is O-glycosylated at three sites. The region spanning 293–484 (GVDIYFGMPG…QELRPQIQEL (192 aa)) is the E2 domain. 2 heparin-binding regions span residues 310-342 (FLRA…SKNL) and 410-441 (LLAL…DPEK). Asparagine 337 is a glycosylation site (N-linked (GlcNAc...) asparagine). The tract at residues 442-459 (AQQMRFQVHTHLQVIEER) is collagen-binding. A glycan (N-linked (GlcNAc...) asparagine) is linked at asparagine 461. Residues 492–546 (PSELEAPAPGGSSEDKGGLQPPDSKDDTPMTLPKGSTEQDAASPEKEKMNPLEQY) are disordered. 2 stretches are compositionally biased toward basic and acidic residues: residues 504–519 (SEDK…KDDT) and 534–546 (SPEK…LEQY). N-linked (GlcNAc...) asparagine glycosylation occurs at asparagine 551. Histidine 561 is a Cu(2+) binding site. A Zn(2+)-binding site is contributed by histidine 561. The helical transmembrane segment at 581–603 (AVSGLLIMGAGGGSLIVLSMLLL) threads the bilayer. The short motif at 604–615 (RRKKPYGAISHG) is the Basolateral sorting signal element. Topologically, residues 604-650 (RRKKPYGAISHGVVEVDPMLTLEEQQLRELQRHGYENPTYRFLEERP) are cytoplasmic. The tract at residues 632 to 649 (ELQRHGYENPTYRFLEER) is interaction with DAB1. Residues 636-650 (HGYENPTYRFLEERP) form an interaction with DAB2 region. A Clathrin-binding motif is present at residues 640–643 (NPTY). An NPXY motif; contains endocytosis signal motif is present at residues 640–643 (NPTY).

The protein belongs to the APP family. As to quaternary structure, monomer and homodimer. Heparin binding promotes homodimerization. Binds, via its C-terminus, to the PID domain of several cytoplasmic proteins, including APBB and APBA family members, MAPK8IP1 and DAB1. Binding to Dab1 inhibits its serine phosphorylation. Interacts with CPEB1. Interacts (via NPXY motif) with DAB2 (via PID domain); the interaction is impaired by tyrosine phosphorylation of the NPXY motif. Interacts (via NPXY motif) with DAB1. Post-translationally, proteolytically cleaved by caspases during neuronal apoptosis. Cleaved, in vitro, at Asp-620 by caspase-3. In terms of processing, N- and O-glycosylated. O-glycosylation with core 1 or possibly core 8 glycans. Glycosylation on Ser-227 is the preferred site to Thr-228. As to expression, expressed in the cerebral cortex where it is localized to the postsynaptic density (PSD).

Its subcellular location is the cell membrane. It is found in the cytoplasm. Functionally, may play a role in postsynaptic function. The C-terminal gamma-secretase processed fragment, ALID1, activates transcription activation through APBB1 (Fe65) binding. Couples to JIP signal transduction through C-terminal binding. May interact with cellular G-protein signaling pathways. Can regulate neurite outgrowth through binding to components of the extracellular matrix such as heparin and collagen I. The gamma-CTF peptide, C30, is a potent enhancer of neuronal apoptosis. This is Amyloid beta precursor like protein 1 (APLP1) from Homo sapiens (Human).